The following is a 185-amino-acid chain: Large ribosomal subunit protein uL5 (185 aa).

This sequence belongs to the universal ribosomal protein uL5 family. Part of the 50S ribosomal subunit; part of the 5S rRNA/L5/L18/L25 subcomplex. Contacts the 5S rRNA and the P site tRNA. Forms a bridge to the 30S subunit in the 70S ribosome.

Functionally, this is one of the proteins that bind and probably mediate the attachment of the 5S RNA into the large ribosomal subunit, where it forms part of the central protuberance. In the 70S ribosome it contacts protein S13 of the 30S subunit (bridge B1b), connecting the 2 subunits; this bridge is implicated in subunit movement. Contacts the P site tRNA; the 5S rRNA and some of its associated proteins might help stabilize positioning of ribosome-bound tRNAs. The chain is Large ribosomal subunit protein uL5 from Brucella abortus (strain 2308).